The primary structure comprises 248 residues: UPF0246 protein A1I_02510 (248 aa).

It belongs to the UPF0246 family.

The chain is UPF0246 protein A1I_02510 from Rickettsia bellii (strain OSU 85-389).